We begin with the raw amino-acid sequence, 304 residues long: Putative dihydroorotate dehydrogenase A (fumarate) (304 aa).

FMN contacts are provided by residues Ser22 and 46–47; that span reads KG. Substrate contacts are provided by residues Lys46 and 70–74; that span reads NSVGL. The FMN site is built by Asn100 and Asn128. Asn128 serves as a coordination point for substrate. The Nucleophile role is filled by Cys131. Lys166 and Val192 together coordinate FMN. 193–194 is a binding site for substrate; it reads NT. Residues Gly218, 244-245, and 266-267 contribute to the FMN site; these read GG and GT.

This sequence belongs to the dihydroorotate dehydrogenase family. Type 1 subfamily. In terms of assembly, homodimer. The cofactor is FMN.

The protein localises to the cytoplasm. It catalyses the reaction (S)-dihydroorotate + fumarate = orotate + succinate. It functions in the pathway pyrimidine metabolism; UMP biosynthesis via de novo pathway. Its function is as follows. Catalyzes the conversion of dihydroorotate to orotate with fumarate as the electron acceptor. The polypeptide is Putative dihydroorotate dehydrogenase A (fumarate) (pyrD) (Solibacter usitatus (strain Ellin6076)).